We begin with the raw amino-acid sequence, 406 residues long: MDAVVLSIGTELIDGHLTDTNATFLARELAALGIPLRWVAQVGDDLDWIVRMLRRAWEDASLIVTTGGIGPTEDDLTREAIAQLLAEPLTIDPALLEEIRAFFAARGLTMPERNAKQASRIPSCEPLPNPIGTAPGWFVRRDGHIIVTMPGVPREMMRMWHEQAVPRLLPSIGGGAIRFRTLKTIGLGESLVEERIHDLIATSRARIATYAKDDGVHVRITAHAPDAGAAERLLDEVERALRARLGSAVYGTDDTTLGGAILELLGRSGWTLAITEWASGSRLTSLLAEEPAAGQFLRTATILTSQPPLDSSLEEVARDLAQRTAVAAGSDCGLAIIVRIDPGPTADRSVGQAALAVSTPATVVTRTHQITSHPQEIRRRVGLWAAEFLRLALLEASIQESTATSA.

It belongs to the CinA family.

The protein is CinA-like protein of Thermomicrobium roseum (strain ATCC 27502 / DSM 5159 / P-2).